Consider the following 393-residue polypeptide: NAD(P)H-quinone oxidoreductase subunit H, chloroplastic (393 aa).

Belongs to the complex I 49 kDa subunit family. NDH is composed of at least 16 different subunits, 5 of which are encoded in the nucleus.

Its subcellular location is the plastid. It is found in the chloroplast thylakoid membrane. It catalyses the reaction a plastoquinone + NADH + (n+1) H(+)(in) = a plastoquinol + NAD(+) + n H(+)(out). The enzyme catalyses a plastoquinone + NADPH + (n+1) H(+)(in) = a plastoquinol + NADP(+) + n H(+)(out). NDH shuttles electrons from NAD(P)H:plastoquinone, via FMN and iron-sulfur (Fe-S) centers, to quinones in the photosynthetic chain and possibly in a chloroplast respiratory chain. The immediate electron acceptor for the enzyme in this species is believed to be plastoquinone. Couples the redox reaction to proton translocation, and thus conserves the redox energy in a proton gradient. The polypeptide is NAD(P)H-quinone oxidoreductase subunit H, chloroplastic (Agrostis stolonifera (Creeping bentgrass)).